We begin with the raw amino-acid sequence, 268 residues long: GRYTVQNQWGGSSAPWNDAGLWILGSRGNQNVMAVDVNSSDGGANLNGTMTYSGEGPIGFKGARRGESNVYDVENQWGGSSAPWHAGGQFVIGSRSGQGVLAVNITSSDGGKTLTGTMTYEREGPIGFKGTQSGGDTYNVENQWGGSSAPWNKAGIWALGDRSGQAMIAMDVSSSDGGKTLEGTMQYKGEGPIGFRGKLSGANNYSVENQWGGSSAPWNAAGDWLIGDRHNQNITAVKVSSDNDGKNLDGTCTYEREGPIGFKGVATS.

A run of 4 repeats spans residues Gly1 to Glu67, Ser68 to Gly135, Asp136 to Ala202, and Asn203 to Ser268. The 4 X approximate tandem repeats stretch occupies residues Gly1–Ser268.

In terms of assembly, monomer.

In terms of biological role, lectin specific for high mannose N-glycans, recognizes the branched moiety of these glycans. Does not recognize other types of N-glycans or monosaccharides. Agglutinates trypsin-treated sheep and rabbit erythrocytes and untreated sheep erythrocytes. Has mitogenic activity on mouse lymphocytes. Does not require metal ions for activity. The chain is Lectin ESA-2 from Eucheuma serra (Marine red alga).